The primary structure comprises 181 residues: Crossover junction endodeoxyribonuclease RuvC (181 aa).

Residues Asp8, Glu67, and Asp139 contribute to the active site. Asp8, Glu67, and Asp139 together coordinate Mg(2+).

This sequence belongs to the RuvC family. As to quaternary structure, homodimer which binds Holliday junction (HJ) DNA. The HJ becomes 2-fold symmetrical on binding to RuvC with unstacked arms; it has a different conformation from HJ DNA in complex with RuvA. In the full resolvosome a probable DNA-RuvA(4)-RuvB(12)-RuvC(2) complex forms which resolves the HJ. The cofactor is Mg(2+).

Its subcellular location is the cytoplasm. The catalysed reaction is Endonucleolytic cleavage at a junction such as a reciprocal single-stranded crossover between two homologous DNA duplexes (Holliday junction).. In terms of biological role, the RuvA-RuvB-RuvC complex processes Holliday junction (HJ) DNA during genetic recombination and DNA repair. Endonuclease that resolves HJ intermediates. Cleaves cruciform DNA by making single-stranded nicks across the HJ at symmetrical positions within the homologous arms, yielding a 5'-phosphate and a 3'-hydroxyl group; requires a central core of homology in the junction. The consensus cleavage sequence is 5'-(A/T)TT(C/G)-3'. Cleavage occurs on the 3'-side of the TT dinucleotide at the point of strand exchange. HJ branch migration catalyzed by RuvA-RuvB allows RuvC to scan DNA until it finds its consensus sequence, where it cleaves and resolves the cruciform DNA. In Acinetobacter baylyi (strain ATCC 33305 / BD413 / ADP1), this protein is Crossover junction endodeoxyribonuclease RuvC.